We begin with the raw amino-acid sequence, 329 residues long: Ketol-acid reductoisomerase (NADP(+)) (329 aa).

The KARI N-terminal Rossmann domain occupies 1–181; sequence MKVYYENDAD…GATRSGVLQT (181 aa). NADP(+) is bound by residues 24–27, Arg-47, and 82–85; these read YGSQ and DQVQ. Residue His-107 is part of the active site. Gly-133 serves as a coordination point for NADP(+). The KARI C-terminal knotted domain maps to 182-327; the sequence is TFREETETDL…GELRKMMSWL (146 aa). Asp-190, Glu-194, Glu-226, and Glu-230 together coordinate Mg(2+). Ser-251 contributes to the substrate binding site.

Belongs to the ketol-acid reductoisomerase family. The cofactor is Mg(2+).

The catalysed reaction is (2R)-2,3-dihydroxy-3-methylbutanoate + NADP(+) = (2S)-2-acetolactate + NADPH + H(+). The enzyme catalyses (2R,3R)-2,3-dihydroxy-3-methylpentanoate + NADP(+) = (S)-2-ethyl-2-hydroxy-3-oxobutanoate + NADPH + H(+). Its pathway is amino-acid biosynthesis; L-isoleucine biosynthesis; L-isoleucine from 2-oxobutanoate: step 2/4. It participates in amino-acid biosynthesis; L-valine biosynthesis; L-valine from pyruvate: step 2/4. Functionally, involved in the biosynthesis of branched-chain amino acids (BCAA). Catalyzes an alkyl-migration followed by a ketol-acid reduction of (S)-2-acetolactate (S2AL) to yield (R)-2,3-dihydroxy-isovalerate. In the isomerase reaction, S2AL is rearranged via a Mg-dependent methyl migration to produce 3-hydroxy-3-methyl-2-ketobutyrate (HMKB). In the reductase reaction, this 2-ketoacid undergoes a metal-dependent reduction by NADPH to yield (R)-2,3-dihydroxy-isovalerate. In Maridesulfovibrio salexigens (strain ATCC 14822 / DSM 2638 / NCIMB 8403 / VKM B-1763) (Desulfovibrio salexigens), this protein is Ketol-acid reductoisomerase (NADP(+)).